The following is a 303-amino-acid chain: GMP synthase [glutamine-hydrolyzing] subunit B (303 aa).

A GMPS ATP-PPase domain is found at 1–183 (MDVEKFVENA…LGLPKEISER (183 aa)). 28–34 (SGGVDSS) contributes to the ATP binding site.

As to quaternary structure, heterodimer composed of a glutamine amidotransferase subunit (A) and a GMP-binding subunit (B).

The enzyme catalyses XMP + L-glutamine + ATP + H2O = GMP + L-glutamate + AMP + diphosphate + 2 H(+). The protein operates within purine metabolism; GMP biosynthesis; GMP from XMP (L-Gln route): step 1/1. Functionally, catalyzes the synthesis of GMP from XMP. This is GMP synthase [glutamine-hydrolyzing] subunit B (guaAB) from Archaeoglobus fulgidus (strain ATCC 49558 / DSM 4304 / JCM 9628 / NBRC 100126 / VC-16).